Here is a 283-residue protein sequence, read N- to C-terminus: Thymidylate synthase (283 aa).

R22 contacts dUMP. C160 functions as the Nucleophile in the catalytic mechanism. Residues 180–183, N191, and 221–223 each bind dUMP; these read RSCD and HIY. Residue D183 participates in (6R)-5,10-methylene-5,6,7,8-tetrahydrofolate binding. Position 282 (S282) interacts with (6R)-5,10-methylene-5,6,7,8-tetrahydrofolate.

Belongs to the thymidylate synthase family. Bacterial-type ThyA subfamily. As to quaternary structure, homodimer.

It is found in the cytoplasm. The enzyme catalyses dUMP + (6R)-5,10-methylene-5,6,7,8-tetrahydrofolate = 7,8-dihydrofolate + dTMP. It participates in pyrimidine metabolism; dTTP biosynthesis. Catalyzes the reductive methylation of 2'-deoxyuridine-5'-monophosphate (dUMP) to 2'-deoxythymidine-5'-monophosphate (dTMP) while utilizing 5,10-methylenetetrahydrofolate (mTHF) as the methyl donor and reductant in the reaction, yielding dihydrofolate (DHF) as a by-product. This enzymatic reaction provides an intracellular de novo source of dTMP, an essential precursor for DNA biosynthesis. The chain is Thymidylate synthase from Histophilus somni (strain 129Pt) (Haemophilus somnus).